Here is a 153-residue protein sequence, read N- to C-terminus: Small ribosomal subunit protein uS5c (153 aa).

One can recognise an S5 DRBM domain in the interval 11–74 (WQERVIQIRR…VDAKKQLINI (64 aa)).

It belongs to the universal ribosomal protein uS5 family. As to quaternary structure, part of the 30S ribosomal subunit. Contacts protein S4.

It localises to the plastid. It is found in the chloroplast. In terms of biological role, with S4 and S12 plays an important role in translational accuracy. The sequence is that of Small ribosomal subunit protein uS5c (rps5) from Cyanidioschyzon merolae (strain NIES-3377 / 10D) (Unicellular red alga).